The following is a 411-amino-acid chain: Heparan-sulfate 6-O-sulfotransferase 1 (411 aa).

The Cytoplasmic segment spans residues 11–17 (MVERASK). A helical; Signal-anchor for type II membrane protein transmembrane segment spans residues 18–37 (FVLVVAGSVCFMLILYQYAG). The Lumenal portion of the chain corresponds to 38-411 (PGLSLGAPGG…DYMSHIIEKW (374 aa)). 93 to 101 (HIQKTGGTT) contacts 3'-phosphoadenylyl sulfate. Residues 123–124 (KK), arginine 140, tryptophan 145, and histidine 150 contribute to the substrate site. Histidine 150 acts as the Proton acceptor in catalysis. 3'-phosphoadenylyl sulfate is bound by residues arginine 185 and serine 193. Histidine 197 and tryptophan 204 together coordinate substrate. Residue asparagine 264 is glycosylated (N-linked (GlcNAc...) asparagine). 317–319 (MQY) lines the 3'-phosphoadenylyl sulfate pocket. Asparagine 320 carries an N-linked (GlcNAc...) asparagine glycan. Position 323-324 (323-324 (RA)) interacts with 3'-phosphoadenylyl sulfate. The stretch at 352-387 (KDLFQQRYQYKRQLERREQRLRSREERLLHRAKEAL) forms a coiled coil.

This sequence belongs to the sulfotransferase 6 family. Post-translationally, N-glycosylated. In terms of tissue distribution, expressed in fetal brain.

It localises to the membrane. The catalysed reaction is alpha-D-glucosaminyl-[heparan sulfate](n) + 3'-phosphoadenylyl sulfate = 6-sulfo-alpha-D-glucosaminyl-[heparan sulfate](n) + adenosine 3',5'-bisphosphate + H(+). Functionally, 6-O-sulfation enzyme which catalyzes the transfer of sulfate from 3'-phosphoadenosine 5'-phosphosulfate (PAPS) to position 6 of the N-sulfoglucosamine residue (GlcNS) of heparan sulfate. Critical for normal neuronal development where it may play a role in neuron branching. May also play a role in limb development. May prefer iduronic acid. This chain is Heparan-sulfate 6-O-sulfotransferase 1, found in Homo sapiens (Human).